The following is a 757-amino-acid chain: Palmitoyltransferase AKR1 (757 aa).

Composition is skewed to polar residues over residues 1–20 (MSDI…STDP) and 36–46 (ESISSLQPIVS). The interval 1–54 (MSDINTESGESTSLPNSTDPPLSDVNIDVEDDDTAESISSLQPIVSNTTNPPEE) is disordered. The Cytoplasmic segment spans residues 1–307 (MSDINTESGE…KLFKKSDHAK (307 aa)). ANK repeat units lie at residues 58–88 (PVLG…DLNT), 92–121 (GDIT…DVNA), 126–155 (LEAT…DPTM), 159–188 (QGFN…AKGI), 197–226 (KGRT…STKI), and 230–259 (GGFT…DFFL). A helical transmembrane segment spans residues 308–328 (VITFFVPLVALSIIFILFTHL). At 329 to 331 (HPL) the chain is on the lumenal side. Residues 332-352 (FALLISLIFGLAVNKALKELI) form a helical membrane-spanning segment. The Cytoplasmic portion of the chain corresponds to 353–375 (LPSYSNYGLHSTSLLKSPFLSGT). Residues 376 to 396 (FFGSLLLLTIVWIFKIAPFTI) form a helical membrane-spanning segment. Residues 397-402 (FKSRLL) lie on the Lumenal side of the membrane. The helical transmembrane segment at 403–423 (TNFFMFLILMQIYYLFIKLIF) threads the bilayer. Over 424-498 (SDPGCVPIET…YNDIGLKNHK (75 aa)) the chain is Cytoplasmic. A DHHC domain is found at 455–505 (NFCLETWIRKPLRSHFSTLNTHNVARFDHFCPWIYNDIGLKNHKNFMWFIL). C485 serves as the catalytic S-palmitoyl cysteine intermediate. Residues 499–519 (NFMWFILLTEVGIWFFISLTM) form a helical membrane-spanning segment. Residues 520–550 (KYFDILEDTNEDVACFLLGDDELCAGFVYDR) lie on the Lumenal side of the membrane. The helical transmembrane segment at 551 to 571 (FTFLIALWALIQSVWVGFLIV) threads the bilayer. Residues 572 to 757 (VQVFQTFTGV…YPEPTGPESV (186 aa)) lie on the Cytoplasmic side of the membrane. The disordered stretch occupies residues 614-647 (ELRNDDDDTAASRTGNNPNHSNGTTIPSEGSRIN). Residues 624 to 646 (ASRTGNNPNHSNGTTIPSEGSRI) show a composition bias toward polar residues.

Belongs to the DHHC palmitoyltransferase family. AKR/ZDHHC17 subfamily.

The protein resides in the early endosome membrane. Its subcellular location is the golgi apparatus membrane. It catalyses the reaction L-cysteinyl-[protein] + hexadecanoyl-CoA = S-hexadecanoyl-L-cysteinyl-[protein] + CoA. Its function is as follows. Palmitoyltransferase specific for casein kinase 1. This is Palmitoyltransferase AKR1 (AKR1) from Naumovozyma castellii (Yeast).